Reading from the N-terminus, the 130-residue chain is DNA-directed RNA polymerase subunit omega (130 aa).

The segment at 110–130 (EELLKGLEGLAPPEEQPEEEE) is disordered.

This sequence belongs to the RNA polymerase subunit omega family. As to quaternary structure, the RNAP catalytic core consists of 2 alpha, 1 beta, 1 beta' and 1 omega subunit. When a sigma factor is associated with the core the holoenzyme is formed, which can initiate transcription.

It catalyses the reaction RNA(n) + a ribonucleoside 5'-triphosphate = RNA(n+1) + diphosphate. Functionally, promotes RNA polymerase assembly. Latches the N- and C-terminal regions of the beta' subunit thereby facilitating its interaction with the beta and alpha subunits. The polypeptide is DNA-directed RNA polymerase subunit omega (Afipia carboxidovorans (strain ATCC 49405 / DSM 1227 / KCTC 32145 / OM5) (Oligotropha carboxidovorans)).